The chain runs to 491 residues: Probable glycine dehydrogenase (decarboxylating) subunit 2 (491 aa).

The residue at position 264 (K264) is an N6-(pyridoxal phosphate)lysine.

Belongs to the GcvP family. C-terminal subunit subfamily. In terms of assembly, the glycine cleavage system is composed of four proteins: P, T, L and H. In this organism, the P 'protein' is a heterodimer of two subunits. It depends on pyridoxal 5'-phosphate as a cofactor.

The enzyme catalyses N(6)-[(R)-lipoyl]-L-lysyl-[glycine-cleavage complex H protein] + glycine + H(+) = N(6)-[(R)-S(8)-aminomethyldihydrolipoyl]-L-lysyl-[glycine-cleavage complex H protein] + CO2. The glycine cleavage system catalyzes the degradation of glycine. The P protein binds the alpha-amino group of glycine through its pyridoxal phosphate cofactor; CO(2) is released and the remaining methylamine moiety is then transferred to the lipoamide cofactor of the H protein. The chain is Probable glycine dehydrogenase (decarboxylating) subunit 2 from Coxiella burnetii (strain Dugway 5J108-111).